The sequence spans 202 residues: MLTERQQELLDFLRVYQRQQGVMPSTRDIQLHFGFASQTAAMSHLKALERKGVIRRLAGKARAVVFPEVMERETVDIPIFGLIPAGFTADNPEHSDGNLTLDLRTMGLSPRSKPFALKVRGDSMTGAHIIQGDYVILEQRDPRPKDIVAALMDGETTLKRYLVDNGQPFLRAENPSYPDLIPARELMIQGVMVGLFRPYNGR.

Residues S123 and K159 each act as for autocatalytic cleavage activity in the active site.

This sequence belongs to the peptidase S24 family. Homodimer.

It carries out the reaction Hydrolysis of Ala-|-Gly bond in repressor LexA.. Binds the consensus sequence 5'-TGTTC-N(4)-GAACA-3'; some genes have a tandem consensus sequence, at high concentrations their binding is cooperative. Binds to the promoters of a number of genes, including dinB, imuA, lexA, recA, recQ, splB and uvrA. Represses a number of genes involved in the response to DNA damage (SOS response). In the presence of single-stranded DNA, RecA interacts with LexA causing an autocatalytic cleavage which disrupts the DNA-binding part of LexA, leading to derepression of the SOS regulon and eventually DNA repair. The polypeptide is LexA repressor (Verrucomicrobium spinosum (strain ATCC 43997 / DSM 4136 / JCM 18804 / IFAM 1439)).